A 238-amino-acid chain; its full sequence is tRNA (guanine-N(7)-)-methyltransferase (238 aa).

E68, E93, D120, and D143 together coordinate S-adenosyl-L-methionine. D143 is an active-site residue. Residues K147, D179, and 216–219 contribute to the substrate site; that span reads TKFE.

The protein belongs to the class I-like SAM-binding methyltransferase superfamily. TrmB family.

It carries out the reaction guanosine(46) in tRNA + S-adenosyl-L-methionine = N(7)-methylguanosine(46) in tRNA + S-adenosyl-L-homocysteine. The protein operates within tRNA modification; N(7)-methylguanine-tRNA biosynthesis. Its function is as follows. Catalyzes the formation of N(7)-methylguanine at position 46 (m7G46) in tRNA. The polypeptide is tRNA (guanine-N(7)-)-methyltransferase (Shewanella baltica (strain OS223)).